We begin with the raw amino-acid sequence, 549 residues long: Glucose-6-phosphate isomerase (549 aa).

The active-site Proton donor is E355. Active-site residues include H386 and K514.

This sequence belongs to the GPI family.

The protein localises to the cytoplasm. The catalysed reaction is alpha-D-glucose 6-phosphate = beta-D-fructose 6-phosphate. Its pathway is carbohydrate biosynthesis; gluconeogenesis. It participates in carbohydrate degradation; glycolysis; D-glyceraldehyde 3-phosphate and glycerone phosphate from D-glucose: step 2/4. Functionally, catalyzes the reversible isomerization of glucose-6-phosphate to fructose-6-phosphate. In Salmonella typhi, this protein is Glucose-6-phosphate isomerase.